The sequence spans 120 residues: Large ribosomal subunit protein uL18 (120 aa).

Belongs to the universal ribosomal protein uL18 family. Part of the 50S ribosomal subunit; part of the 5S rRNA/L5/L18/L25 subcomplex. Contacts the 5S and 23S rRNAs.

Functionally, this is one of the proteins that bind and probably mediate the attachment of the 5S RNA into the large ribosomal subunit, where it forms part of the central protuberance. The polypeptide is Large ribosomal subunit protein uL18 (Rhodopseudomonas palustris (strain BisB18)).